Reading from the N-terminus, the 79-residue chain is Small ribosomal subunit protein bS20 (79 aa).

Belongs to the bacterial ribosomal protein bS20 family.

Functionally, binds directly to 16S ribosomal RNA. This is Small ribosomal subunit protein bS20 from Karelsulcia muelleri (strain GWSS) (Sulcia muelleri).